The chain runs to 446 residues: Exodeoxyribonuclease 7 large subunit (446 aa).

It belongs to the XseA family. As to quaternary structure, heterooligomer composed of large and small subunits.

It is found in the cytoplasm. It catalyses the reaction Exonucleolytic cleavage in either 5'- to 3'- or 3'- to 5'-direction to yield nucleoside 5'-phosphates.. Bidirectionally degrades single-stranded DNA into large acid-insoluble oligonucleotides, which are then degraded further into small acid-soluble oligonucleotides. In Streptococcus equi subsp. zooepidemicus (strain MGCS10565), this protein is Exodeoxyribonuclease 7 large subunit.